The sequence spans 1026 residues: Multidrug resistance protein MdtC (1026 aa).

11 helical membrane passes run 15–35 (ILIAAAITLCGILGFRLLPVA), 333–353 (EVEETLAISVALVILVVFLFL), 360–380 (LIPAVAVPVSLIGTFAAMYLC), 387–407 (LSLMALTIATGFVVDDAIVVL), 431–451 (VGFTVISMSLSLVAVFLPLLL), 463–483 (FAVTLSVAIGISLVVSLTLTP), 528–548 (LVGVVFLGTVALNIWLYIAIP), 853–873 (LILIVAAIATVYIVLGILYES), 897–917 (LFNAPFSLIALIGIMLLIGIV), 953–973 (PIMMTTLAALFGALPLVLSDG), and 984–1004 (ITIVGGLVMSQLLTLYTTPVV).

It belongs to the resistance-nodulation-cell division (RND) (TC 2.A.6) family. MdtC subfamily. In terms of assembly, part of a tripartite efflux system composed of MdtA, MdtB and MdtC. MdtC forms a heteromultimer with MdtB.

It is found in the cell inner membrane. In Salmonella heidelberg (strain SL476), this protein is Multidrug resistance protein MdtC.